A 296-amino-acid chain; its full sequence is GTP-binding protein GEM (296 aa).

Disordered regions lie at residues 1–20 (MTLN…PQQQ) and 37–68 (PHQY…SVIS). Residues 57-68 (SWSSDSTDSVIS) show a composition bias toward low complexity. GTP is bound by residues 82 to 89 (GEQGVGKS) and 191 to 194 (NKSD). The segment at 266–285 (ARRFWGKIVAKNNKNMAFKL) is calmodulin-binding.

It belongs to the small GTPase superfamily. RGK family. As to quaternary structure, interacts with calmodulin in a Ca(2+)-dependent manner. Binds ROCK1. Phosphorylated on tyrosine residues.

The protein localises to the cell membrane. Its function is as follows. Could be a regulatory protein, possibly participating in receptor-mediated signal transduction at the plasma membrane. Has guanine nucleotide-binding activity but undetectable intrinsic GTPase activity. This Pongo abelii (Sumatran orangutan) protein is GTP-binding protein GEM (GEM).